We begin with the raw amino-acid sequence, 277 residues long: Type II restriction enzyme RsrI (277 aa).

Belongs to the EcoRI type II restriction endonuclease family. As to quaternary structure, homodimer. It depends on Mg(2+) as a cofactor.

The enzyme catalyses Endonucleolytic cleavage of DNA to give specific double-stranded fragments with terminal 5'-phosphates.. A P subtype restriction enzyme that recognizes the double-stranded sequence 5'-GAATTC-3' and cleaves after G-1. The chain is Type II restriction enzyme RsrI (rsrIR) from Cereibacter sphaeroides (Rhodobacter sphaeroides).